Consider the following 734-residue polypeptide: MRKPADKAQVDAELQRVVELRHPEPHAVLGIHPDGDGVVIRAFRPDAVAIHVLPESGGRVAMTHRPGGVYEARINGKDQTFNYLLEVEYPGKRVFTLRDPYSFLPTLGEMDLYYAGEGRHERLWERMGAHLLHHHGVRGTSFAVWAPTAAGVSVVGDFNGWDGRLHSMRRMGSSGIWELFVPEVGEGTRYKFEIRPGQGGPNVLKADPFAFRTEVPPATASVVHDLARYTWGDAAWLEQRAQRRDVHHQPWSVYEVHLGSWRRVVEDGDRPMTYRELAPALAEYIKFTGFTHIELLPVAEHPYGGSWGYQVGGYYAPTARFGHPDDLRFFIDHMHQEGIGVLVDWVPGHFPRDLHALGQFDGTALYEHADPRKGAQPDWGTLVFNFGRNEVRNFLIANALFWIEEYHIDGLRVDAVASMLYLDYSRKQGEWIPNRWGGRENEEAIHFLRELNETVHRKHPGVVVIAEESTAWPKVSAPVSEGGLGFDYKWNMGWMHDTLSYFSKDPIYRQYHHNQLTFGLLYAFSEQFMLPLSHDEVVHGKGSLYGRMPGDPWQKRANLRALFAWMWAHPGKKLVFMGGEFGQPAEWNHDKSLDWHLTHDPGHHGILQLVSDLNRIYRDMPALHDADGEPMGFQWLQPDSAAYNVFAFVRRARQPGRHVVCIANLSPTVRENYRVGFPFQGRYVELLNTDAEQYGGSNLGNMGQIHTEPTGWDGQPASATLTLPPLSVLWFTPG.

Asp-414 serves as the catalytic Nucleophile. Catalysis depends on Glu-467, which acts as the Proton donor.

It belongs to the glycosyl hydrolase 13 family. GlgB subfamily. In terms of assembly, monomer.

It carries out the reaction Transfers a segment of a (1-&gt;4)-alpha-D-glucan chain to a primary hydroxy group in a similar glucan chain.. It functions in the pathway glycan biosynthesis; glycogen biosynthesis. In terms of biological role, catalyzes the formation of the alpha-1,6-glucosidic linkages in glycogen by scission of a 1,4-alpha-linked oligosaccharide from growing alpha-1,4-glucan chains and the subsequent attachment of the oligosaccharide to the alpha-1,6 position. This Myxococcus xanthus (strain DK1622) protein is 1,4-alpha-glucan branching enzyme GlgB.